The sequence spans 178 residues: uncharacterized protein (178 aa).

This is an uncharacterized protein from Acanthamoeba polyphaga mimivirus (APMV).